We begin with the raw amino-acid sequence, 596 residues long: Potassium-transporting ATPase potassium-binding subunit (596 aa).

10 helical membrane passes run 6-26 (ILTIVLYVGVLLLLAYPLGGF), 67-87 (AIGLIAFNILGVLFVFGLQLF), 136-156 (GLTTQNFLSAASGIVVVIALI), 177-197 (ITLYVLVPISVVYAIFLVGQG), 283-303 (LSNFIQILSIFLIPAALCFTF), 314-334 (WVVLVTMILIFLTVTFAAVHF), 413-433 (GLYGMLVFAILAVFIAGLMIG), 450-470 (MVAIAILVTPILALVGTAIAV), 518-538 (MLAIAMWFGRFGVIVPVLALA), and 560-580 (LFIVLLAGTVILVGALNYVPA).

Belongs to the KdpA family. The system is composed of three essential subunits: KdpA, KdpB and KdpC.

The protein localises to the cell inner membrane. Functionally, part of the high-affinity ATP-driven potassium transport (or Kdp) system, which catalyzes the hydrolysis of ATP coupled with the electrogenic transport of potassium into the cytoplasm. This subunit binds the periplasmic potassium ions and delivers the ions to the membrane domain of KdpB through an intramembrane tunnel. In Polynucleobacter asymbioticus (strain DSM 18221 / CIP 109841 / QLW-P1DMWA-1) (Polynucleobacter necessarius subsp. asymbioticus), this protein is Potassium-transporting ATPase potassium-binding subunit.